A 492-amino-acid polypeptide reads, in one-letter code: GTPase Obg (492 aa).

Residues 2-159 (PRFVDRVVIH…RELTLELKTV (158 aa)) form the Obg domain. The region spanning 160–340 (ADVGLIGFPS…LIFGLWQMIS (181 aa)) is the OBG-type G domain. Residues 166–173 (GFPSAGKS), 191–195 (FTTLV), 212–215 (DVPG), 292–295 (NKID), and 321–323 (STV) contribute to the GTP site. Mg(2+) is bound by residues Ser-173 and Thr-193. Residues 358-438 (PVPVDDSGFR…IGDMTFDWEP (81 aa)) form the OCT domain. The disordered stretch occupies residues 449-492 (SGRGTDARLERTERVGAAERKAARRQRRTGDDAERGTTERGENT). Composition is skewed to basic and acidic residues over residues 453–469 (TDARLERTERVGAAERK) and 476–492 (RTGDDAERGTTERGENT).

This sequence belongs to the TRAFAC class OBG-HflX-like GTPase superfamily. OBG GTPase family. Monomer. Requires Mg(2+) as cofactor.

Its subcellular location is the cytoplasm. Its function is as follows. An essential GTPase which binds GTP, GDP and possibly (p)ppGpp with moderate affinity, with high nucleotide exchange rates and a fairly low GTP hydrolysis rate. Plays a role in control of the cell cycle, stress response, ribosome biogenesis and in those bacteria that undergo differentiation, in morphogenesis control. The polypeptide is GTPase Obg (Mycobacterium avium (strain 104)).